Consider the following 490-residue polypeptide: Keratin, type II cytoskeletal 8 (490 aa).

The span at methionine 1–serine 27 shows a compositional bias: polar residues. Positions methionine 1–phenylalanine 48 are disordered. Positions methionine 1 to glutamine 96 are head. Serine 9 carries the post-translational modification Phosphoserine; by PKC/PRKCE. Lysine 11 participates in a covalent cross-link: Glycyl lysine isopeptide (Lys-Gly) (interchain with G-Cter in SUMO2). A phosphoserine mark is found at serine 13, serine 15, serine 21, and serine 22. Arginine 23 bears the Omega-N-methylarginine mark. Phosphoserine; by PKC/PRKCE is present on serine 24. Threonine 26 bears the Phosphothreonine mark. Serine 27 is subject to Phosphoserine. At arginine 32 the chain carries Omega-N-methylarginine. 3 positions are modified to phosphoserine: serine 34, serine 37, and serine 39. The segment covering serine 34 to phenylalanine 48 has biased composition (low complexity). Omega-N-methylarginine is present on arginine 40. Phosphoserine occurs at positions 43, 44, and 47. At arginine 49 the chain carries Asymmetric dimethylarginine; alternate. At arginine 49 the chain carries Omega-N-methylarginine; alternate. A Phosphoserine modification is found at serine 51. Residue serine 80 is modified to Phosphoserine; by MAPK. The coil 1A stretch occupies residues glutamate 97–leucine 132. In terms of domain architecture, IF rod spans glutamate 97 to leucine 408. Residue lysine 107 is modified to N6-malonyllysine. Glycyl lysine isopeptide (Lys-Gly) (interchain with G-Cter in SUMO2) cross-links involve residues lysine 128 and lysine 136. Positions glutamine 133–tyrosine 149 are linker 1. Residues isoleucine 150–leucine 241 form a coil 1B region. Lysine 203 is covalently cross-linked (Glycyl lysine isopeptide (Lys-Gly) (interchain with G-Cter in SUMO1); alternate). A Glycyl lysine isopeptide (Lys-Gly) (interchain with G-Cter in SUMO2); alternate cross-link involves residue lysine 203. At lysine 213 the chain carries N6-acetyllysine. Residues glutamine 242–isoleucine 265 are linker 12. Serine 259 and serine 280 each carry phosphoserine. A coil 2 region spans residues isoleucine 266–glycine 403. Positions alanine 267–lysine 387 are necessary for interaction with PNN. Lysine 291 participates in a covalent cross-link: Glycyl lysine isopeptide (Lys-Gly) (interchain with G-Cter in SUMO2). Lysine 301 is covalently cross-linked (Glycyl lysine isopeptide (Lys-Gly) (interchain with G-Cter in SUMO2); alternate). N6-acetyllysine; alternate is present on lysine 301. A Glycyl lysine isopeptide (Lys-Gly) (interchain with G-Cter in SUMO2) cross-link involves residue lysine 310. Lysine 331 is covalently cross-linked (Glycyl lysine isopeptide (Lys-Gly) (interchain with G-Cter in SUMO2); alternate). An N6-acetyllysine; alternate modification is found at lysine 331. Serine 336 is modified (phosphoserine). Lysine 399 is covalently cross-linked (Glycyl lysine isopeptide (Lys-Gly) (interchain with G-Cter in SUMO2)). The interval glutamate 404–lysine 490 is tail. Phosphoserine is present on residues serine 406, serine 410, serine 416, serine 423, serine 430, serine 432, and serine 438. Lysine 479 is covalently cross-linked (Glycyl lysine isopeptide (Lys-Gly) (interchain with G-Cter in SUMO1); alternate). Lysine 479 participates in a covalent cross-link: Glycyl lysine isopeptide (Lys-Gly) (interchain with G-Cter in SUMO2); alternate. Serine 482, serine 484, serine 485, and serine 489 each carry phosphoserine.

This sequence belongs to the intermediate filament family. Heterotetramer of two type I and two type II keratins. Forms a heterodimer with KRT18. Associates with KRT20. Interacts with PLEC isoform 1C, when in a heterodimer with KRT18. Interacts with PNN. When associated with KRT19, interacts with DMD. Interacts with TCHP. Interacts with APEX1. Interacts with GPER1. Interacts with EPPK1. Interacts with PKP1 and PKP2. In terms of processing, phosphorylation on serine residues is enhanced during EGF stimulation and mitosis. Ser-80 phosphorylation plays an important role in keratin filament reorganization. Post-translationally, O-glycosylated. O-GlcNAcylation at multiple sites increases solubility, and decreases stability by inducing proteasomal degradation. O-glycosylated (O-GlcNAcylated), in a cell cycle-dependent manner. In terms of tissue distribution, expressed in abundance in the epithelia of colon, bladder, ileum, and stomach, with lower expression observed in earskin (at protein level). Also expressed in pancreas, liver, dudenum and jejunum.

It localises to the cytoplasm. It is found in the nucleus. The protein localises to the nucleoplasm. The protein resides in the nucleus matrix. In terms of biological role, together with KRT19, helps to link the contractile apparatus to dystrophin at the costameres of striated muscle. The chain is Keratin, type II cytoskeletal 8 (Krt8) from Mus musculus (Mouse).